Consider the following 359-residue polypeptide: Transcription factor MafA (359 aa).

S14 carries the post-translational modification Phosphoserine. K32 participates in a covalent cross-link: Glycyl lysine isopeptide (Lys-Gly) (interchain with G-Cter in SUMO2). Disordered stretches follow at residues 40–105 (RFCH…VGGA) and 172–226 (GGGA…AGHH). The segment covering 46–73 (PPGSLSSTPLSTPCSSVPSSPSFCAPSP) has biased composition (low complexity). S49 is subject to Phosphoserine. T53 and T57 each carry phosphothreonine. 2 positions are modified to phosphoserine: S61 and S65. Over residues 74–84 (GTGGGAGGGGS) the composition is skewed to gly residues. Over residues 181–209 (GHHHGAHHTAHHHHSAHHHHHHHHHHGGS) the composition is skewed to basic residues. The segment covering 210–224 (GHHGGGAGHGGGGAG) has biased composition (gly residues). Residues 260–285 (RLKQKRRTLKNRGYAQSCRFKRVQQR) form a basic motif region. The bZIP domain occupies 260-323 (RLKQKRRTLK…DLYKEKYEKL (64 aa)). The segment at 288 to 309 (LESEKCQLQSQVEQLKLEVGRL) is leucine-zipper. Residues 322–359 (KLAGRGGPGGAGGAGFPREPSPAQAGPGAAKGAPDFFL) form a disordered region. Gly residues predominate over residues 325 to 336 (GRGGPGGAGGAG). Low complexity predominate over residues 343–359 (PAQAGPGAAKGAPDFFL).

Belongs to the bZIP family. Maf subfamily. As to quaternary structure, forms homodimers. Interacts with NEUROD1 and PDX1. May interact with MAFB, FOS, JUN and PCAF. In terms of processing, ubiquitinated, leading to its degradation by the proteasome. Phosphorylated at tyrosines. As to expression, expressed in brain, lung, spleen, pancreas and kidney. In the pancreas, expressed in the insulin-producing beta-cells of the islets of Langerhans (at protein level). Also expressed in the eye.

Its subcellular location is the nucleus. Functionally, transcriptional factor that activates insulin gene expression. Acts synergistically with NEUROD1/BETA2 and PDX1. Binds the insulin enhancer C1/RIPE3b element. Binds to consensus TRE-type MARE 5'-TGCTGACTCAGCA-3' DNA sequence. The polypeptide is Transcription factor MafA (Mafa) (Mus musculus (Mouse)).